We begin with the raw amino-acid sequence, 837 residues long: Amyloid-beta A4 precursor protein-binding family A member 1 (837 aa).

Disordered regions lie at residues 1–93 (MNHL…DTAE), 238–342 (YDER…SKEK), and 358–435 (EEVK…ESRK). Residues 23–38 (ESVEADLEHPEVEEEQ) are compositionally biased toward acidic residues. A phosphoserine mark is found at S78, S242, S246, S248, S263, S280, and S285. The segment at 226–314 (YRQEALGARL…TPAGGRPDSP (89 aa)) is munc-18-1 binding. Positions 238–254 (YDERSDGESDSPEKEAE) are enriched in basic and acidic residues. T305 is modified (phosphothreonine). A phosphoserine mark is found at S313 and S367. T370 carries the phosphothreonine modification. The tract at residues 373–436 (EPKEPIWVMR…ASTNKESRKS (64 aa)) is LIN-2/CASK binding. Residues 387–398 (PTRDCDDQRPMD) show a composition bias toward basic and acidic residues. The span at 399 to 418 (GDSPSPGSSSPLGAESSSTS) shows a compositional bias: low complexity. Residues S401, S403, S408, and S568 each carry the phosphoserine modification. One can recognise a PID domain in the interval 457 to 643 (DGIIFAANYL…LLNTQDMYND (187 aa)). The segment at 626 to 641 (LSQKEYSDLLNTQDMY) is autoinhibitory helix linker. PDZ domains follow at residues 656-742 (DVFI…IVRC) and 747-822 (TVLI…TMPA).

As to quaternary structure, part of a multimeric complex containing STXBP1 and STX1A. Interacts with STXBP1. Also part of the brain-specific heterotrimeric complex LIN-10/X11-alpha, LIN-2/CASK, and LIN7. Component of the brain-specific heterotrimeric complex (LIN-10-LIN-2-LIN-7 complex) composed of at least APBA1, CASK, and LIN7, which associates with the motor protein KIF17 to transport vesicles along microtubules. Within the complex, interacts (via PDZ domain) with the motor protein KIF17; the interaction is direct and is required for association of KIF17 with the cargo that is to be transported. Both isoform 1 and isoform 2 bind to the cytoplasmic domain of amyloid protein (APP). Interacts (via PDZ 1 and 2 domains) with FSPB. Isoform 2, but not isoform 1, interacts (via its truncated PID domain) with active, GTP-bound RAB6A and RAB6B. As to expression, brain and spinal cord. Isoform 2 is expressed in testis and brain, but not detected in lung, liver or spleen.

It localises to the cytoplasm. The protein resides in the perinuclear region. The protein localises to the nucleus. Its subcellular location is the golgi apparatus. In terms of biological role, putative function in synaptic vesicle exocytosis by binding to Munc18-1, an essential component of the synaptic vesicle exocytotic machinery. May modulate processing of the amyloid-beta precursor protein (APP) and hence formation of APP-beta. Component of the LIN-10-LIN-2-LIN-7 complex, which associates with the motor protein KIF17 to transport vesicles containing N-methyl-D-aspartate (NMDA) receptor subunit NR2B along microtubules. This is Amyloid-beta A4 precursor protein-binding family A member 1 (APBA1) from Homo sapiens (Human).